We begin with the raw amino-acid sequence, 276 residues long: NADPH-dependent 7-cyano-7-deazaguanine reductase (276 aa).

Substrate is bound at residue 83 to 85; it reads IES. 85–86 contacts NADPH; sequence SK. Cys-184 functions as the Thioimide intermediate in the catalytic mechanism. The Proton donor role is filled by Asp-191. 223-224 is a binding site for substrate; sequence HE. 252-253 serves as a coordination point for NADPH; that stretch reads RG.

This sequence belongs to the GTP cyclohydrolase I family. QueF type 2 subfamily. Homodimer.

It localises to the cytoplasm. The enzyme catalyses 7-aminomethyl-7-carbaguanine + 2 NADP(+) = 7-cyano-7-deazaguanine + 2 NADPH + 3 H(+). It participates in tRNA modification; tRNA-queuosine biosynthesis. Catalyzes the NADPH-dependent reduction of 7-cyano-7-deazaguanine (preQ0) to 7-aminomethyl-7-deazaguanine (preQ1). This chain is NADPH-dependent 7-cyano-7-deazaguanine reductase, found in Pseudomonas syringae pv. syringae (strain B728a).